A 64-amino-acid polypeptide reads, in one-letter code: UPF0370 protein YE1145 (64 aa).

The helical transmembrane segment at Trp3–Ile23 threads the bilayer. Positions Ser36–Lys64 are disordered.

It belongs to the UPF0370 family.

It is found in the cell membrane. This Yersinia enterocolitica serotype O:8 / biotype 1B (strain NCTC 13174 / 8081) protein is UPF0370 protein YE1145.